The following is a 273-amino-acid chain: Shikimate dehydrogenase (NADP(+)) (273 aa).

Residues 19-21 and threonine 66 each bind shikimate; that span reads SKS. The active-site Proton acceptor is lysine 70. Shikimate is bound by residues asparagine 91 and aspartate 107. Residues 131-135 and methionine 218 each bind NADP(+); that span reads GAGGA. Tyrosine 220 is a binding site for shikimate. Residue glycine 242 participates in NADP(+) binding.

This sequence belongs to the shikimate dehydrogenase family. As to quaternary structure, homodimer.

It catalyses the reaction shikimate + NADP(+) = 3-dehydroshikimate + NADPH + H(+). The protein operates within metabolic intermediate biosynthesis; chorismate biosynthesis; chorismate from D-erythrose 4-phosphate and phosphoenolpyruvate: step 4/7. Functionally, involved in the biosynthesis of the chorismate, which leads to the biosynthesis of aromatic amino acids. Catalyzes the reversible NADPH linked reduction of 3-dehydroshikimate (DHSA) to yield shikimate (SA). The protein is Shikimate dehydrogenase (NADP(+)) of Buchnera aphidicola subsp. Acyrthosiphon pisum (strain 5A).